The sequence spans 430 residues: Tol-Pal system protein TolB (430 aa).

The N-terminal stretch at 1–21 is a signal peptide; the sequence is MKQALRVAFGFLMLWAAMLHA.

It belongs to the TolB family. The Tol-Pal system is composed of five core proteins: the inner membrane proteins TolA, TolQ and TolR, the periplasmic protein TolB and the outer membrane protein Pal. They form a network linking the inner and outer membranes and the peptidoglycan layer.

It localises to the periplasm. Its function is as follows. Part of the Tol-Pal system, which plays a role in outer membrane invagination during cell division and is important for maintaining outer membrane integrity. TolB occupies a key intermediary position in the Tol-Pal system because it communicates directly with both membrane-embedded components, Pal in the outer membrane and TolA in the inner membrane. The polypeptide is Tol-Pal system protein TolB (Escherichia fergusonii (strain ATCC 35469 / DSM 13698 / CCUG 18766 / IAM 14443 / JCM 21226 / LMG 7866 / NBRC 102419 / NCTC 12128 / CDC 0568-73)).